The chain runs to 398 residues: Elongation factor Tu (398 aa).

One can recognise a tr-type G domain in the interval K10–E207. The tract at residues G19–T26 is G1. G19–T26 is a binding site for GTP. T26 serves as a coordination point for Mg(2+). The interval G63–N67 is G2. Residues D84–G87 are G3. GTP is bound by residues D84–H88 and N139–D142. A G4 region spans residues N139–D142. Positions S177–L179 are G5.

It belongs to the TRAFAC class translation factor GTPase superfamily. Classic translation factor GTPase family. EF-Tu/EF-1A subfamily. In terms of assembly, monomer.

The protein resides in the cytoplasm. The enzyme catalyses GTP + H2O = GDP + phosphate + H(+). Its function is as follows. GTP hydrolase that promotes the GTP-dependent binding of aminoacyl-tRNA to the A-site of ribosomes during protein biosynthesis. The protein is Elongation factor Tu of Streptococcus uberis (strain ATCC BAA-854 / 0140J).